Consider the following 181-residue polypeptide: Segregation and condensation protein B (181 aa).

Belongs to the ScpB family. Homodimer. Homodimerization may be required to stabilize the binding of ScpA to the Smc head domains. Component of a cohesin-like complex composed of ScpA, ScpB and the Smc homodimer, in which ScpA and ScpB bind to the head domain of Smc. The presence of the three proteins is required for the association of the complex with DNA.

It localises to the cytoplasm. Its function is as follows. Participates in chromosomal partition during cell division. May act via the formation of a condensin-like complex containing Smc and ScpA that pull DNA away from mid-cell into both cell halves. The polypeptide is Segregation and condensation protein B (Desulforamulus reducens (strain ATCC BAA-1160 / DSM 100696 / MI-1) (Desulfotomaculum reducens)).